The sequence spans 283 residues: Putative 4-diphosphocytidyl-2-C-methyl-D-erythritol kinase (283 aa).

The active site involves Lys11. Residue 95 to 105 participates in ATP binding; the sequence is PVCAGMGGGSS. The active site involves Asp137.

The protein belongs to the GHMP kinase family. IspE subfamily.

It catalyses the reaction 4-CDP-2-C-methyl-D-erythritol + ATP = 4-CDP-2-C-methyl-D-erythritol 2-phosphate + ADP + H(+). Functionally, catalyzes the phosphorylation of the position 2 hydroxy group of 4-diphosphocytidyl-2C-methyl-D-erythritol. The protein is Putative 4-diphosphocytidyl-2-C-methyl-D-erythritol kinase of Streptococcus equi subsp. equi (strain 4047).